The chain runs to 164 residues: Nucleotide-binding protein Helmi_22490 (164 aa).

This sequence belongs to the YajQ family.

Nucleotide-binding protein. This Heliobacterium modesticaldum (strain ATCC 51547 / Ice1) protein is Nucleotide-binding protein Helmi_22490.